The chain runs to 329 residues: HTH-type transcriptional regulator ArgR (329 aa).

In terms of domain architecture, HTH araC/xylS-type spans 214–312 (TQAVLLMEAN…GVTPREDRNQ (99 aa)). 2 consecutive DNA-binding regions (H-T-H motif) follow at residues 231 to 252 (DEIAQHVCVSRRQLERIFKQYL) and 279 to 302 (IIQIGLSCGFSSGPHFSSAYRNFF). The tract at residues 307-329 (REDRNQRRGGSAFETTFTPVERG) is disordered. The segment covering 319-329 (FETTFTPVERG) has biased composition (polar residues).

In terms of biological role, argR could be a transcriptional activator of the dauBAR operon in response to the presence of L-Arg. The protein is HTH-type transcriptional regulator ArgR (argR) of Pseudomonas aeruginosa (strain ATCC 15692 / DSM 22644 / CIP 104116 / JCM 14847 / LMG 12228 / 1C / PRS 101 / PAO1).